The chain runs to 347 residues: Aspartate carbamoyltransferase catalytic subunit (347 aa).

Residues R75 and T76 each coordinate carbamoyl phosphate. Residue K103 participates in L-aspartate binding. The carbamoyl phosphate site is built by R125, H153, and Q156. L-aspartate contacts are provided by R193 and R247. G288 and P289 together coordinate carbamoyl phosphate.

The protein belongs to the aspartate/ornithine carbamoyltransferase superfamily. ATCase family. As to quaternary structure, heterododecamer (2C3:3R2) of six catalytic PyrB chains organized as two trimers (C3), and six regulatory PyrI chains organized as three dimers (R2).

The catalysed reaction is carbamoyl phosphate + L-aspartate = N-carbamoyl-L-aspartate + phosphate + H(+). It functions in the pathway pyrimidine metabolism; UMP biosynthesis via de novo pathway; (S)-dihydroorotate from bicarbonate: step 2/3. Its function is as follows. Catalyzes the condensation of carbamoyl phosphate and aspartate to form carbamoyl aspartate and inorganic phosphate, the committed step in the de novo pyrimidine nucleotide biosynthesis pathway. The sequence is that of Aspartate carbamoyltransferase catalytic subunit from Erythrobacter litoralis (strain HTCC2594).